The sequence spans 1764 residues: Cilia- and flagella-associated protein 44 (1764 aa).

WD repeat units lie at residues 115 to 157, 160 to 199, 208 to 248, 255 to 294, 361 to 400, 454 to 493, and 495 to 534; these read GTER…IVLR, AFSQDVYGVAFSPYFEGQLTTSGQGHIRFWRMASTFTGLK, GNVE…VVLT, CHDGPIEALLLDRPAGRVLSAGADGRVRMWDFGAVNDAEP, HPAGAVAGLQLSARTHTALVASADGCLRALDYVSGAVLAE, AHKGAVAALAVSADGGRLVSAGEDGSVFFFDLTAQPQPGT, and VPGMPACGLLAPRAFIKLPSGSGTVTCGVWEAAEGGGVLL. Residues 570 to 654 are disordered; sequence QLVVPKPKRP…GGPSSTTGEL (85 aa). Positions 575–584 are enriched in basic residues; that stretch reads KPKRPKKKKG. Composition is skewed to basic and acidic residues over residues 585–596 and 604–628; these read KNDGEEGDKEGG and GEDKGGEQADGEGGSKEGGEEGRAA. Residues 629 to 641 are compositionally biased toward acidic residues; the sequence is EEEEEEEADDEAD. WD repeat units follow at residues 649–692, 707–752, and 753–791; these read STTG…PLAA, AHAG…LHDM, and QSGRVSGLGLSHDGAYLVTAAADGALHLLALALPPELAP. Residues 821–850 are a coiled coil; the sequence is YTLEEEKQQAERDQQVREAEEKKLSVRQRL. Disordered regions lie at residues 972-1003 and 1426-1468; these read AAAGGEGGAGGRDTDARGKGSDTGGGPGGDAA and KKKA…CPPG. Acidic residues predominate over residues 1434–1462; it reads GEDDYDSEEDEEDEDMGDDEVDDDDDGGE. Coiled-coil stretches lie at residues 1479-1517, 1567-1674, and 1729-1758; these read DLREKRLDEEDMIAEFTKTIEVLRKEKEALAKKQRLVEQ, LVFS…DAKI, and EERDALVALVNAQAAELDRLKGQLLALRRK.

It belongs to the CFAP44 family.

Its subcellular location is the cell projection. The protein localises to the cilium. It localises to the flagellum. The protein resides in the cytoplasm. It is found in the cytoskeleton. Its subcellular location is the flagellum axoneme. Functionally, flagellar protein involved in sperm flagellum axoneme organization and function. The sequence is that of Cilia- and flagella-associated protein 44 from Chlamydomonas reinhardtii (Chlamydomonas smithii).